The primary structure comprises 94 residues: MSKIEEKLFQDRYRVDSGRPHIRIKDPDHCTELSEKQCTVCCPAGCYTRETNGKVTLVTDGCLECGTCRIICQDSGNLEWEWPRGGFGILFKFG.

2 consecutive 4Fe-4S ferredoxin-type domains span residues 20–52 and 53–83; these read PHIRIKDPDHCTELSEKQCTVCCPAGCYTRETN and GKVTLVTDGCLECGTCRIICQDSGNLEWEWP.

This sequence to ferredoxins from P.putida and C.tartarivorum, ferredoxin I from A.vinelandii, ferredoxin II from D.desulfuricans.

In terms of biological role, could be a 3Fe-4S cluster-containing protein. In Azotobacter vinelandii, this protein is Ferredoxin-like protein (fixX).